The sequence spans 785 residues: Endonuclease MutS2 (785 aa).

335-342 serves as a coordination point for ATP; the sequence is GPNTGGKT. The 76-residue stretch at 710 to 785 folds into the Smr domain; the sequence is LDLRGERYED…GNGVTIVEFK (76 aa).

It belongs to the DNA mismatch repair MutS family. MutS2 subfamily. As to quaternary structure, homodimer. Binds to stalled ribosomes, contacting rRNA.

Endonuclease that is involved in the suppression of homologous recombination and thus may have a key role in the control of bacterial genetic diversity. Functionally, acts as a ribosome collision sensor, splitting the ribosome into its 2 subunits. Detects stalled/collided 70S ribosomes which it binds and splits by an ATP-hydrolysis driven conformational change. Acts upstream of the ribosome quality control system (RQC), a ribosome-associated complex that mediates the extraction of incompletely synthesized nascent chains from stalled ribosomes and their subsequent degradation. Probably generates substrates for RQC. The polypeptide is Endonuclease MutS2 (Listeria innocua serovar 6a (strain ATCC BAA-680 / CLIP 11262)).